The chain runs to 96 residues: MNFVSSILIRWCDVPVYILLRKCVIYKFAYSSRKIESVHCAITDDEVMSYNNEDMVPFSAINLPIRFLIFYNAFRSNTSWNYNESQIGNLTISKQS.

It is found in the mitochondrion. This is an uncharacterized protein from Schizosaccharomyces pombe (strain 972 / ATCC 24843) (Fission yeast).